A 600-amino-acid polypeptide reads, in one-letter code: DDB1- and CUL4-associated factor 15 (600 aa).

The interval 1 to 30 (MAPSSKSERNSGAGSGGGGPGGAGGKRAAG) is disordered. Positions 13–27 (AGSGGGGPGGAGGKR) are enriched in gly residues. Ser50 bears the Phosphoserine mark. Zn(2+)-binding residues include Cys193, Cys196, Cys211, and His214. E7820-binding positions include Phe231 and 234–235 (AF). Over residues 280-295 (PASPPEPQSPELPPAL) the composition is skewed to pro residues. Residues 280-316 (PASPPEPQSPELPPALPSFCPEAAPARSSGSPEPSPA) form a disordered region. Ser310 and Ser314 each carry phosphoserine.

In terms of assembly, component of the DCX(DCAF15) complex, also named CLR4(DCAF15) complex, composed of DCAF15, DDB1, cullin-4 (CUL4A or CUL4B), DDA1 and RBX1.

Its pathway is protein modification; protein ubiquitination. Aryl sulfonamide anticancer drugs change the substrate specificity of DCAF15 by acting as a molecular glue that promotes binding between DCAF15 and weak affinity interactors, such as RBM39. Its function is as follows. Substrate-recognition component of the DCX(DCAF15) complex, a cullin-4-RING E3 ubiquitin-protein ligase complex that mediates ubiquitination and degradation of target proteins. The DCX(DCAF15) complex acts as a regulator of the natural killer (NK) cells effector functions, possibly by mediating ubiquitination and degradation of cohesin subunits SMC1A and SMC3. May play a role in the activation of antigen-presenting cells (APC) and their interaction with NK cells. Functionally, binding of aryl sulfonamide anticancer drugs, such as indisulam (E7070) or E7820, change the substrate specificity of the DCX(DCAF15) complex, leading to promote ubiquitination and degradation of splicing factor RBM39. RBM39 degradation results in splicing defects and death in cancer cell lines. Aryl sulfonamide anticancer drugs change the substrate specificity of DCAF15 by acting as a molecular glue that promotes binding between DCAF15 and weak affinity interactor RBM39. Aryl sulfonamide anticancer drugs also promote ubiquitination and degradation of RBM23 and PRPF39. The protein is DDB1- and CUL4-associated factor 15 of Homo sapiens (Human).